The following is a 616-amino-acid chain: UvrABC system protein C (616 aa).

Residues 21 to 99 (HQPGVYRMYD…IKLYLPKYNV (79 aa)) enclose the GIY-YIG domain. In terms of domain architecture, UVR spans 209 to 244 (RQVIASLVEKMEQASQSLNFEQAATFRDQIQALRRV).

It belongs to the UvrC family. In terms of assembly, interacts with UvrB in an incision complex.

Its subcellular location is the cytoplasm. In terms of biological role, the UvrABC repair system catalyzes the recognition and processing of DNA lesions. UvrC both incises the 5' and 3' sides of the lesion. The N-terminal half is responsible for the 3' incision and the C-terminal half is responsible for the 5' incision. In Photobacterium profundum (strain SS9), this protein is UvrABC system protein C.